Reading from the N-terminus, the 93-residue chain is Small ribosomal subunit protein uS19 (93 aa).

Belongs to the universal ribosomal protein uS19 family.

In terms of biological role, protein S19 forms a complex with S13 that binds strongly to the 16S ribosomal RNA. In Campylobacter hominis (strain ATCC BAA-381 / DSM 21671 / CCUG 45161 / LMG 19568 / NCTC 13146 / CH001A), this protein is Small ribosomal subunit protein uS19.